Reading from the N-terminus, the 617-residue chain is Type VII secretion systems protein EssD (617 aa).

The segment at 420 to 448 (QNHVTHGPKDSMVRSEGKHSISSHEMNSS) is disordered. Over residues 426 to 438 (GPKDSMVRSEGKH) the composition is skewed to basic and acidic residues.

It belongs to the EssD family. As to quaternary structure, interacts (via C-terminal) with EssG; this interaction blocks EssD activity. Interacts with EssE.

It is found in the secreted. It localises to the cell membrane. Functionally, component of the type VII secretion system (Ess). Plays a role in Ess secretion during infection. Required for the efficient secretion of EsxA. Required for abscess formation and staphylococcal persistence in host tissue. Possesses a toxic DNase activity that is modulated by EssG by forming a nuclease toxin-antitoxin pair. This nuclease toxin targets competitor bacteria. This is Type VII secretion systems protein EssD from Staphylococcus aureus (strain Newman).